A 503-amino-acid chain; its full sequence is ATP synthase subunit alpha (503 aa).

170–177 (GDRKTGKT) contacts ATP.

This sequence belongs to the ATPase alpha/beta chains family. In terms of assembly, F-type ATPases have 2 components, CF(1) - the catalytic core - and CF(0) - the membrane proton channel. CF(1) has five subunits: alpha(3), beta(3), gamma(1), delta(1), epsilon(1). CF(0) has four main subunits: a, b, b' and c.

It localises to the cellular thylakoid membrane. It catalyses the reaction ATP + H2O + 4 H(+)(in) = ADP + phosphate + 5 H(+)(out). Functionally, produces ATP from ADP in the presence of a proton gradient across the membrane. The alpha chain is a regulatory subunit. The polypeptide is ATP synthase subunit alpha (Gloeothece citriformis (strain PCC 7424) (Cyanothece sp. (strain PCC 7424))).